Consider the following 111-residue polypeptide: UPF0339 protein in ptx operon 5'region (111 aa).

A run of 2 repeats spans residues 10 to 58 (DKAG…RYER) and 61 to 109 (SGAD…VVEV).

The protein belongs to the UPF0339 family. Duplicated subfamily.

This Stutzerimonas stutzeri (Pseudomonas stutzeri) protein is UPF0339 protein in ptx operon 5'region.